Consider the following 199-residue polypeptide: V-type ATP synthase subunit E (199 aa).

Belongs to the V-ATPase E subunit family.

Its function is as follows. Produces ATP from ADP in the presence of a proton gradient across the membrane. The sequence is that of V-type ATP synthase subunit E (atpE) from Borreliella burgdorferi (strain ATCC 35210 / DSM 4680 / CIP 102532 / B31) (Borrelia burgdorferi).